We begin with the raw amino-acid sequence, 316 residues long: tRNA dimethylallyltransferase (316 aa).

17 to 24 (GPTASGKT) is an ATP binding site. 19–24 (TASGKT) provides a ligand contact to substrate. Interaction with substrate tRNA stretches follow at residues 42-45 (DSAL), 166-170 (QRLSR), and 247-252 (RCVGYR).

It belongs to the IPP transferase family. In terms of assembly, monomer. The cofactor is Mg(2+).

The enzyme catalyses adenosine(37) in tRNA + dimethylallyl diphosphate = N(6)-dimethylallyladenosine(37) in tRNA + diphosphate. Catalyzes the transfer of a dimethylallyl group onto the adenine at position 37 in tRNAs that read codons beginning with uridine, leading to the formation of N6-(dimethylallyl)adenosine (i(6)A). The polypeptide is tRNA dimethylallyltransferase (Erwinia tasmaniensis (strain DSM 17950 / CFBP 7177 / CIP 109463 / NCPPB 4357 / Et1/99)).